The chain runs to 156 residues: 6,7-dimethyl-8-ribityllumazine synthase (156 aa).

5-amino-6-(D-ribitylamino)uracil contacts are provided by residues Phe-22, 57–59 (AYE), and 81–83 (TVI). 86 to 87 (GT) is a (2S)-2-hydroxy-3-oxobutyl phosphate binding site. The active-site Proton donor is the His-89. Phe-114 serves as a coordination point for 5-amino-6-(D-ribitylamino)uracil. (2S)-2-hydroxy-3-oxobutyl phosphate is bound at residue Arg-128.

This sequence belongs to the DMRL synthase family. Forms an icosahedral capsid composed of 60 subunits, arranged as a dodecamer of pentamers.

It carries out the reaction (2S)-2-hydroxy-3-oxobutyl phosphate + 5-amino-6-(D-ribitylamino)uracil = 6,7-dimethyl-8-(1-D-ribityl)lumazine + phosphate + 2 H2O + H(+). It functions in the pathway cofactor biosynthesis; riboflavin biosynthesis; riboflavin from 2-hydroxy-3-oxobutyl phosphate and 5-amino-6-(D-ribitylamino)uracil: step 1/2. Catalyzes the formation of 6,7-dimethyl-8-ribityllumazine by condensation of 5-amino-6-(D-ribitylamino)uracil with 3,4-dihydroxy-2-butanone 4-phosphate. This is the penultimate step in the biosynthesis of riboflavin. This is 6,7-dimethyl-8-ribityllumazine synthase from Edwardsiella ictaluri (strain 93-146).